A 955-amino-acid chain; its full sequence is 2-oxoglutarate dehydrogenase E1 component (955 aa).

The protein belongs to the alpha-ketoglutarate dehydrogenase family. As to quaternary structure, homodimer. Part of the 2-oxoglutarate dehydrogenase (OGDH) complex composed of E1 (2-oxoglutarate dehydrogenase), E2 (dihydrolipoamide succinyltransferase) and E3 (dihydrolipoamide dehydrogenase); the complex contains multiple copies of the three enzymatic components (E1, E2 and E3). Requires thiamine diphosphate as cofactor.

The catalysed reaction is N(6)-[(R)-lipoyl]-L-lysyl-[protein] + 2-oxoglutarate + H(+) = N(6)-[(R)-S(8)-succinyldihydrolipoyl]-L-lysyl-[protein] + CO2. E1 component of the 2-oxoglutarate dehydrogenase (OGDH) complex which catalyzes the decarboxylation of 2-oxoglutarate, the first step in the conversion of 2-oxoglutarate to succinyl-CoA and CO(2). The chain is 2-oxoglutarate dehydrogenase E1 component from Bacillus cereus (strain B4264).